The chain runs to 67 residues: ATP synthase F(0) complex subunit 8 (67 aa).

A helical transmembrane segment spans residues 8–24; it reads TWFTVILSMIISLFMLL. Lys-54 bears the N6-acetyllysine; alternate mark. N6-succinyllysine; alternate is present on Lys-54. The residue at position 57 (Lys-57) is an N6-acetyllysine.

The protein belongs to the ATPase protein 8 family. In terms of assembly, component of the ATP synthase complex composed at least of ATP5F1A/subunit alpha, ATP5F1B/subunit beta, ATP5MC1/subunit c (homooctomer), MT-ATP6/subunit a, MT-ATP8/subunit 8, ATP5ME/subunit e, ATP5MF/subunit f, ATP5MG/subunit g, ATP5MK/subunit k, ATP5MJ/subunit j, ATP5F1C/subunit gamma, ATP5F1D/subunit delta, ATP5F1E/subunit epsilon, ATP5PF/subunit F6, ATP5PB/subunit b, ATP5PD/subunit d, ATP5PO/subunit OSCP. ATP synthase complex consists of a soluble F(1) head domain (subunits alpha(3) and beta(3)) - the catalytic core - and a membrane F(0) domain - the membrane proton channel (subunits c, a, 8, e, f, g, k and j). These two domains are linked by a central stalk (subunits gamma, delta, and epsilon) rotating inside the F1 region and a stationary peripheral stalk (subunits F6, b, d, and OSCP). Interacts with PRICKLE3.

The protein localises to the mitochondrion membrane. In terms of biological role, subunit 8, of the mitochondrial membrane ATP synthase complex (F(1)F(0) ATP synthase or Complex V) that produces ATP from ADP in the presence of a proton gradient across the membrane which is generated by electron transport complexes of the respiratory chain. ATP synthase complex consist of a soluble F(1) head domain - the catalytic core - and a membrane F(1) domain - the membrane proton channel. These two domains are linked by a central stalk rotating inside the F(1) region and a stationary peripheral stalk. During catalysis, ATP synthesis in the catalytic domain of F(1) is coupled via a rotary mechanism of the central stalk subunits to proton translocation. In vivo, can only synthesize ATP although its ATP hydrolase activity can be activated artificially in vitro. Part of the complex F(0) domain. The sequence is that of ATP synthase F(0) complex subunit 8 from Cavia porcellus (Guinea pig).